The primary structure comprises 66 residues: Large ribosomal subunit protein bL33c (66 aa).

This sequence belongs to the bacterial ribosomal protein bL33 family.

Its subcellular location is the plastid. It localises to the chloroplast. This Nandina domestica (Heavenly bamboo) protein is Large ribosomal subunit protein bL33c.